Here is a 237-residue protein sequence, read N- to C-terminus: Demethylmenaquinone methyltransferase (237 aa).

Residues Thr58, Asp79, and 106–107 each bind S-adenosyl-L-methionine; that span reads NA.

It belongs to the class I-like SAM-binding methyltransferase superfamily. MenG/UbiE family.

The catalysed reaction is a 2-demethylmenaquinol + S-adenosyl-L-methionine = a menaquinol + S-adenosyl-L-homocysteine + H(+). It participates in quinol/quinone metabolism; menaquinone biosynthesis; menaquinol from 1,4-dihydroxy-2-naphthoate: step 2/2. Methyltransferase required for the conversion of demethylmenaquinol (DMKH2) to menaquinol (MKH2). The protein is Demethylmenaquinone methyltransferase of Bacillus cereus (strain B4264).